Here is a 286-residue protein sequence, read N- to C-terminus: Puff II/9-2 protein (286 aa).

A signal peptide spans 1-19; that stretch reads MKQFIVLTVVLLAIQELQG. Residues 61–235 form a helical region; that stretch reads IDGLKKENNI…EKDLNTLRCE (175 aa). The N-linked (GlcNAc...) asparagine glycan is linked to Asn156.

The protein is Puff II/9-2 protein (II/9-2) of Bradysia coprophila (Dark-winged fungus gnat).